A 271-amino-acid chain; its full sequence is Glutamate racemase (271 aa).

Residues 12–13 (DS) and 44–45 (YG) each bind substrate. Cysteine 75 serves as the catalytic Proton donor/acceptor. Residue 76–77 (NT) coordinates substrate. The Proton donor/acceptor role is filled by cysteine 185. Substrate is bound at residue 186-187 (TH).

Belongs to the aspartate/glutamate racemases family.

It carries out the reaction L-glutamate = D-glutamate. Its pathway is cell wall biogenesis; peptidoglycan biosynthesis. Its function is as follows. Provides the (R)-glutamate required for cell wall biosynthesis. This chain is Glutamate racemase, found in Methylococcus capsulatus (strain ATCC 33009 / NCIMB 11132 / Bath).